The primary structure comprises 248 residues: MNVVIVIPARLSSNRLKEKMLADLEGAPLIVRTWQQAMKSRLANRVVVATDSERIFAVLRDAGAEVVMTSPDLTCGTDRIAEAAEQVGGDVFVNLQGDEPLIDPATIDLAIAPFFEDGPMPDCTTLVFPLKPDERHIIDDPHVVKAVLDAKGNALYFSRCPIPYRRETLPDTRYYRHIGLYAFRADVLKAFVALPPSMLERTESLEQLRLLENGYRIRCIETTTDTPGVNTEEELEEVRRLFRERFGS.

The protein belongs to the KdsB family.

Its subcellular location is the cytoplasm. It catalyses the reaction 3-deoxy-alpha-D-manno-oct-2-ulosonate + CTP = CMP-3-deoxy-beta-D-manno-octulosonate + diphosphate. It participates in nucleotide-sugar biosynthesis; CMP-3-deoxy-D-manno-octulosonate biosynthesis; CMP-3-deoxy-D-manno-octulosonate from 3-deoxy-D-manno-octulosonate and CTP: step 1/1. The protein operates within bacterial outer membrane biogenesis; lipopolysaccharide biosynthesis. Functionally, activates KDO (a required 8-carbon sugar) for incorporation into bacterial lipopolysaccharide in Gram-negative bacteria. This is 3-deoxy-manno-octulosonate cytidylyltransferase from Chlorobaculum parvum (strain DSM 263 / NCIMB 8327) (Chlorobium vibrioforme subsp. thiosulfatophilum).